Reading from the N-terminus, the 972-residue chain is Multiple C2 domain and transmembrane region protein 8 (972 aa).

The C2 1 domain maps to 1–107 (MMSNLKLGVE…PYSEAVGLPY (107 aa)). A disordered region spans residues 142-203 (PNLISTKKIP…MMESSLYQAP (62 aa)). The segment covering 150–159 (IPSKSRHKFH) has biased composition (basic residues). The segment covering 161-173 (IPTNESNHSPRGN) has biased composition (polar residues). The segment covering 179-194 (PQPPPPQSQTALPPPM) has biased composition (pro residues). C2 domains are found at residues 232 to 352 (GGGK…PEWY), 384 to 507 (ALNA…NRWF), and 543 to 669 (YSSD…SHSY). Positions 265, 271, 318, 320, and 325 each coordinate Ca(2+). Helical transmembrane passes span 803–823 (IIFL…SLCL) and 924–944 (TVVL…LYIM).

The protein belongs to the MCTP family. The cofactor is Ca(2+). Expressed in root hairs.

It is found in the membrane. Its subcellular location is the vesicle. Its function is as follows. May function as a signaling molecule by regulating the trafficking of other regulators. This chain is Multiple C2 domain and transmembrane region protein 8, found in Arabidopsis thaliana (Mouse-ear cress).